We begin with the raw amino-acid sequence, 150 residues long: Putative pre-16S rRNA nuclease (150 aa).

Belongs to the YqgF nuclease family.

It is found in the cytoplasm. Could be a nuclease involved in processing of the 5'-end of pre-16S rRNA. The sequence is that of Putative pre-16S rRNA nuclease from Syntrophus aciditrophicus (strain SB).